A 20-amino-acid chain; its full sequence is Magnificalysin I (20 aa).

Residues 1–10 (ALAGTIIAGA) form a plays an important role in the hemolytic activity region. Positions 9–20 (GASLTFKILDEV) are N-terminal region.

Belongs to the actinoporin family. Sea anemone subfamily. As to quaternary structure, octamer or nonamer in membranes. Monomer in the soluble state.

The protein resides in the secreted. Its subcellular location is the nematocyst. It localises to the target cell membrane. Pore-forming protein that forms cations-selective hydrophilic pores of around 1 nm and causes cytolysis. Pore formation is a multi-step process that involves specific recognition of membrane sphingomyelin (but neither cholesterol nor phosphatidylcholine) using aromatic rich region and adjacent phosphocholine (POC) binding site, firm binding to the membrane (mainly driven by hydrophobic interactions) accompanied by the transfer of the N-terminal region to the lipid-water interface and finally pore formation after oligomerization of monomers. The polypeptide is Magnificalysin I (Heteractis magnifica (Magnificent sea anemone)).